A 371-amino-acid polypeptide reads, in one-letter code: AA9 family lytic polysaccharide monooxygenase B (371 aa).

The N-terminal stretch at 1 to 25 (MSIAKIAGVVLGSAALVAGHGYVSG) is a signal peptide. Cu(2+) contacts are provided by histidine 20 and histidine 104. Cystine bridges form between cysteine 74–cysteine 194 and cysteine 115–cysteine 119. N-linked (GlcNAc...) asparagine glycosylation occurs at asparagine 154. O2-binding residues include histidine 180 and glutamine 189. Residue tyrosine 191 participates in Cu(2+) binding. The tract at residues 304–332 (HVQATSSSAAASTPTASSGASSGSGSSSS) is disordered. A compositionally biased stretch (low complexity) spans 307–332 (ATSSSAAASTPTASSGASSGSGSSSS).

This sequence belongs to the polysaccharide monooxygenase AA9 family. Cu(2+) serves as cofactor.

It is found in the secreted. It carries out the reaction [(1-&gt;4)-beta-D-glucosyl]n+m + reduced acceptor + O2 = 4-dehydro-beta-D-glucosyl-[(1-&gt;4)-beta-D-glucosyl]n-1 + [(1-&gt;4)-beta-D-glucosyl]m + acceptor + H2O.. Lytic polysaccharide monooxygenase (LPMO) that depolymerizes crystalline and amorphous polysaccharides via the oxidation of scissile alpha- or beta-(1-4)-glycosidic bonds, yielding C1 and C4 oxidation products. Catalysis by LPMOs requires the reduction of the active-site copper from Cu(II) to Cu(I) by a reducing agent and H(2)O(2) or O(2) as a cosubstrate. In addition to cellulose, also cleaves the beta-(1!4)-glucan backbone of tamarind xyloglucan, irrespective of substitutions which contrasts with AA9A xyloglucan cleavage activity. The protein is AA9 family lytic polysaccharide monooxygenase B of Aspergillus tamarii.